Here is a 449-residue protein sequence, read N- to C-terminus: 3-phosphoshikimate 1-carboxyvinyltransferase (449 aa).

A disordered region spans residues 1 to 26; that stretch reads MNHHLPSRPARSRQSQGLKGNLRVPG. Lys-28, Ser-29, and Arg-33 together coordinate 3-phosphoshikimate. Lys-28 is a binding site for phosphoenolpyruvate. Gly-100 and Arg-128 together coordinate phosphoenolpyruvate. 3-phosphoshikimate-binding residues include Ser-174, Gln-176, Asp-327, and Lys-354. Phosphoenolpyruvate is bound at residue Gln-176. Catalysis depends on Asp-327, which acts as the Proton acceptor. Positions 358 and 403 each coordinate phosphoenolpyruvate.

This sequence belongs to the EPSP synthase family. Monomer.

It is found in the cytoplasm. The enzyme catalyses 3-phosphoshikimate + phosphoenolpyruvate = 5-O-(1-carboxyvinyl)-3-phosphoshikimate + phosphate. Its pathway is metabolic intermediate biosynthesis; chorismate biosynthesis; chorismate from D-erythrose 4-phosphate and phosphoenolpyruvate: step 6/7. Functionally, catalyzes the transfer of the enolpyruvyl moiety of phosphoenolpyruvate (PEP) to the 5-hydroxyl of shikimate-3-phosphate (S3P) to produce enolpyruvyl shikimate-3-phosphate and inorganic phosphate. This is 3-phosphoshikimate 1-carboxyvinyltransferase from Chelativorans sp. (strain BNC1).